Consider the following 144-residue polypeptide: MAFNFTAFTYIVALIGDAFLIFFAIFHVIAFDELKTDYKNPIDQCNSLNPLVLPEYLLHLFLNLLFLFCGEWYSLCLNIPLIAYHIWRYKNRPLMSGPGLYDPTTVLKTDTLSRNLREGWIKLAVYLISFFYYIYGMVYSLIST.

Residues 1 to 10 (MAFNFTAFTY) are Lumenal-facing. The interval 1-57 (MAFNFTAFTYIVALIGDAFLIFFAIFHVIAFDELKTDYKNPIDQCNSLNPLVLPEYL) is interaction with grk. A helical membrane pass occupies residues 11–31 (IVALIGDAFLIFFAIFHVIAF). Residues 32 to 56 (DELKTDYKNPIDQCNSLNPLVLPEY) are Cytoplasmic-facing. The helical transmembrane segment at 57-77 (LLHLFLNLLFLFCGEWYSLCL) threads the bilayer. Topologically, residues 78-122 (NIPLIAYHIWRYKNRPLMSGPGLYDPTTVLKTDTLSRNLREGWIK) are lumenal. Residues 123–143 (LAVYLISFFYYIYGMVYSLIS) traverse the membrane as a helical segment. A topological domain (cytoplasmic) is located at residue Thr144.

The protein belongs to the cornichon family. In terms of assembly, interacts with grk.

It is found in the endoplasmic reticulum membrane. Acts as a cargo receptor necessary for the transportation of gurken (grk) to a transitional endoplasmic reticulum (tER) site and promotes its incorporation into coat protein complex II (COPII) vesicles. Associated with gurken, produces a signal received by torpedo resulting in a signaling pathway that first establishes posterior follicle cell fates and normal localization of the anterior and posterior determinants, later they act in a signaling event inducing dorsal follicle cell fates and regulating the dorsal-ventral pattern of egg and embryo. The polypeptide is Protein cornichon (cni) (Drosophila virilis (Fruit fly)).